Here is a 526-residue protein sequence, read N- to C-terminus: Putative D-lactate dehydrogenase C713.03, mitochondrial (526 aa).

Positions 93-272 constitute an FAD-binding PCMH-type domain; it reads YRGKTQLALK…TKLSVICPKR (180 aa).

Belongs to the FAD-binding oxidoreductase/transferase type 4 family. The cofactor is FAD.

It is found in the mitochondrion matrix. It carries out the reaction (R)-lactate + 2 Fe(III)-[cytochrome c] = 2 Fe(II)-[cytochrome c] + pyruvate + 2 H(+). This chain is Putative D-lactate dehydrogenase C713.03, mitochondrial, found in Schizosaccharomyces pombe (strain 972 / ATCC 24843) (Fission yeast).